A 344-amino-acid chain; its full sequence is uncharacterized protein (344 aa).

The tract at residues 304–344 (AVPAPTPRRPLDSVLQIRQTPEKGRNASDRNARETGWFSPP) is disordered. Residues 323–336 (TPEKGRNASDRNAR) are compositionally biased toward basic and acidic residues.

This is an uncharacterized protein from Mycobacterium tuberculosis (strain CDC 1551 / Oshkosh).